Consider the following 375-residue polypeptide: Chaperone protein DnaJ (375 aa).

Residues 5 to 70 (DYYEVLGVER…GKRSAYDQYG (66 aa)) form the J domain. A CR-type zinc finger spans residues 134–212 (GTTVTIRVPT…CHGQGRVEES (79 aa)). Zn(2+) contacts are provided by Cys147, Cys150, Cys164, Cys167, Cys186, Cys189, Cys200, and Cys203. CXXCXGXG motif repeat units follow at residues 147–154 (CKTCDGTG), 164–171 (CTTCGGIG), 186–193 (CPRCHGSG), and 200–207 (CGSCHGQG).

This sequence belongs to the DnaJ family. Homodimer. Zn(2+) serves as cofactor.

It is found in the cytoplasm. Functionally, participates actively in the response to hyperosmotic and heat shock by preventing the aggregation of stress-denatured proteins and by disaggregating proteins, also in an autonomous, DnaK-independent fashion. Unfolded proteins bind initially to DnaJ; upon interaction with the DnaJ-bound protein, DnaK hydrolyzes its bound ATP, resulting in the formation of a stable complex. GrpE releases ADP from DnaK; ATP binding to DnaK triggers the release of the substrate protein, thus completing the reaction cycle. Several rounds of ATP-dependent interactions between DnaJ, DnaK and GrpE are required for fully efficient folding. Also involved, together with DnaK and GrpE, in the DNA replication of plasmids through activation of initiation proteins. This chain is Chaperone protein DnaJ, found in Ectopseudomonas mendocina (strain ymp) (Pseudomonas mendocina).